Reading from the N-terminus, the 371-residue chain is Anhydro-N-acetylmuramic acid kinase (371 aa).

15 to 22 (GTSLDGVD) is a binding site for ATP.

The protein belongs to the anhydro-N-acetylmuramic acid kinase family.

It catalyses the reaction 1,6-anhydro-N-acetyl-beta-muramate + ATP + H2O = N-acetyl-D-muramate 6-phosphate + ADP + H(+). It functions in the pathway amino-sugar metabolism; 1,6-anhydro-N-acetylmuramate degradation. It participates in cell wall biogenesis; peptidoglycan recycling. Functionally, catalyzes the specific phosphorylation of 1,6-anhydro-N-acetylmuramic acid (anhMurNAc) with the simultaneous cleavage of the 1,6-anhydro ring, generating MurNAc-6-P. Is required for the utilization of anhMurNAc either imported from the medium or derived from its own cell wall murein, and thus plays a role in cell wall recycling. This is Anhydro-N-acetylmuramic acid kinase from Cereibacter sphaeroides (strain ATCC 17023 / DSM 158 / JCM 6121 / CCUG 31486 / LMG 2827 / NBRC 12203 / NCIMB 8253 / ATH 2.4.1.) (Rhodobacter sphaeroides).